We begin with the raw amino-acid sequence, 1027 residues long: MYEGKHIHFSEVDNKPLCSYSPKLCKQRRLNGYAFCIRHVLEDKTAPFKQCEYVAKYNSQRCTNPIPKSEDRRYCNSHLQVLGFIPKKERKKKNDPIDEVKVRHQMDTMAFSLTVPTLALKMPNGLDGMSLSPPGARVPLHYLETELEDPFAFNEEDDDLKKGATVRKKLQSKLAQNRQRQRETEILKVRQEHFSPPPAPSQQQPPQQHSHLSPLSTSLKPPAPPQGSVCKSPQPQNTSLPMQGVAPTTHTIAQARQLSHKRPLPLLPSSRAPTVDPPRTDRILMKATAFSPHFSCISRLQRLVKLCTQKHQLDTDLFPHLGLDWSEESGEEPEDSEQASPYQVAWSIRETLRYQRHASDDDDAESRSSRVTQLCTYFQQKYKHLCRLERAESRQKKCRHTFRKALLQAASKEPECTGQLIQELRRAACSRTSISRTKLREVEPAACSGTVKGEQCANKALPFTRHCFQHILLNHSQQLFSSCTAKFADGQQCSVPVFDITHQTPLCEEHAKKMDNFLRGDNSRKVQHQQQRKPRKKTKPPALTKKHKKKRRRGPRRPQKPIPPAVPQGNLSMPASVSLPVEASHIRSPSTPELSADELPDDIANEITDIPHDLELNQEDFSDVLPRLPDDLQDFDFFEGKNGDLLPTTEEAEELERALQAVTSLECLSTIGVLAQSDGVPVQELSDRGIGVFSTGTGASGIQSLSREVNTDLGELLNGRIVHDNFSSLELDENLLRSATLSNPPTPLAGQIQGQFSAPANVGLTSATLISQSALGERAFPGQFHGLHDGSHASQRPHPAQLLSKADDLITSRQQYSSDHSHSSPHGSHYDSEHVPSPYSDHITSPHTTSYSGDNMAATFSAEMPIMAQHLLPTQLEVPLGGVVNPRTHWGNLPVNLGDPSPFSNLLGADGHLLSTSLSTPPTTSNSETTQPAFATVTPSSSSVLPGLPQTSFSGMGPSAELMASTSPKQQLPQFSAAFGHQLSSHSGIPKDLQPSHSSIAPPTGFTVTGATATSTNNASSPFPSPN.

Residue K87 forms a Glycyl lysine isopeptide (Lys-Gly) (interchain with G-Cter in SUMO2) linkage. At S132 the chain carries Phosphoserine. Disordered regions lie at residues H193–P278, R519–P574, R813–S850, L914–K969, and Q982–N1027. Low complexity predominate over residues S201–S216. The segment covering V229–Q257 has biased composition (polar residues). The span at K525–Q559 shows a compositional bias: basic residues. Low complexity predominate over residues L914–P932. A compositionally biased stretch (polar residues) spans V937–S954. Positions A1001–N1027 are enriched in low complexity.

Belongs to the INO80D family. Component of the chromatin remodeling INO80 complex; specifically part of a complex module associated with the N-terminus of INO80.

The protein localises to the nucleus. Its function is as follows. Putative regulatory component of the chromatin remodeling INO80 complex which is involved in transcriptional regulation, DNA replication and probably DNA repair. In Homo sapiens (Human), this protein is INO80 complex subunit D.